Reading from the N-terminus, the 500-residue chain is 4-aminobutyrate aminotransferase, mitochondrial (500 aa).

Residues 1–28 constitute a mitochondrion transit peptide; the sequence is MASMLLAQRLACSFQHSYRLLVPGSRHI. Residue cysteine 163 coordinates [2Fe-2S] cluster. 164–165 serves as a coordination point for pyridoxal 5'-phosphate; it reads GS. Cysteine 166 lines the [2Fe-2S] cluster pocket. Residue arginine 220 coordinates substrate. At lysine 231 the chain carries N6-succinyllysine. Residue lysine 252 is modified to N6-acetyllysine; alternate. At lysine 252 the chain carries N6-succinyllysine; alternate. Lysine 279 and lysine 318 each carry N6-acetyllysine. Lysine 357 bears the N6-(pyridoxal phosphate)lysine mark. Pyridoxal 5'-phosphate is bound at residue threonine 381. At lysine 413 the chain carries N6-acetyllysine; alternate. Lysine 413 is subject to N6-succinyllysine; alternate. Residues lysine 452 and lysine 470 each carry the N6-acetyllysine modification.

Belongs to the class-III pyridoxal-phosphate-dependent aminotransferase family. Homodimer; disulfide-linked. It depends on pyridoxal 5'-phosphate as a cofactor. Requires [2Fe-2S] cluster as cofactor. In terms of tissue distribution, liver &gt; pancreas &gt; brain &gt; kidney &gt; heart &gt; placenta.

The protein resides in the mitochondrion matrix. It carries out the reaction 4-aminobutanoate + 2-oxoglutarate = succinate semialdehyde + L-glutamate. The catalysed reaction is (S)-3-amino-2-methylpropanoate + 2-oxoglutarate = 2-methyl-3-oxopropanoate + L-glutamate. Catalyzes the conversion of gamma-aminobutyrate and L-beta-aminoisobutyrate to succinate semialdehyde and methylmalonate semialdehyde, respectively. Can also convert delta-aminovalerate and beta-alanine. The protein is 4-aminobutyrate aminotransferase, mitochondrial of Homo sapiens (Human).